Reading from the N-terminus, the 1238-residue chain is uncharacterized protein (1238 aa).

Disordered regions lie at residues 1-38, 122-156, 229-439, 660-1016, 1051-1083, and 1098-1191; these read MSSK…DISS, SSTP…RPSF, PKNN…KNKE, KNKL…TGAA, EEED…KLNS, and KKSG…NASR. 3 stretches are compositionally biased toward low complexity: residues 10-26, 129-149, and 234-276; these read NKNN…NNNN, LSPF…QSPL, and QIDS…TQSQ. Residues 317–343 show a composition bias toward polar residues; sequence ELQNQTQINKSKQDLTNISQKINITTS. The span at 344–361 shows a compositional bias: basic and acidic residues; sequence QHDKDDLGEYRMSEKGGG. Acidic residues predominate over residues 362-372; sequence DDGDDDDDYDN. Over residues 383-394 the composition is skewed to basic residues; the sequence is TNKKQQQQHHHK. Positions 395-416 are enriched in basic and acidic residues; it reads GKEESQSEYYEKEKEKEKEDIA. 3 stretches are compositionally biased toward low complexity: residues 417-435, 678-691, and 712-792; these read TTRA…NNIN, QQQQ…QQQE, and QPSQ…QEKQ. Basic and acidic residues predominate over residues 793–805; sequence QSQEKHQSQEKHQ. 2 stretches are compositionally biased toward low complexity: residues 806–859 and 882–906; these read SQQS…SQQK and SQSQ…QSQR. Positions 916–927 are enriched in acidic residues; it reads ENQDSENLDDTV. The span at 929 to 944 shows a compositional bias: polar residues; it reads MNYNQIPSTLDHSTLQ. Positions 966–975 are enriched in basic and acidic residues; the sequence is EIERRRRELA. Positions 976-990 are enriched in acidic residues; the sequence is GEDSDEEFEILDEDQ. 2 stretches are compositionally biased toward low complexity: residues 1062–1083 and 1108–1121; these read QNNN…KLNS and SSSS…NKKN. Positions 1123-1133 are enriched in polar residues; it reads PQPTKSVNKPR. Residues 1142–1181 are compositionally biased toward low complexity; that stretch reads SQNRQKQSEQQQQQPQQQPQLPQQQQQQQQQQQLRQQQNE. The span at 1182–1191 shows a compositional bias: polar residues; it reads NTISSLNASR.

This is an uncharacterized protein from Dictyostelium discoideum (Social amoeba).